The sequence spans 494 residues: MLPKRRRARVGSPSGDAASSTPPSTRFPGVAIYLVEPRMGRSRRAFLTGLARSKGFRVLDACSSEATHVVMEETSAEEAVSWQERRMAAAPPGCTPPALLDISWLTESLGAGQPVPVECRHRLEVAGPRKGPLSPAWMPAYACQRPTPLTHHNTGLSEALEILAEAAGFEGSEGRLLTFCRAASVLKALPSPVTTLSQLQGLPHFGEHSSRVVQELLEHGVCEEVERVRRSERYQTMKLFTQIFGVGVKTADRWYREGLRTLDDLREQPQKLTQQQKAGLQHHQDLSTPVLRSDVDALQQVVEEAVGQALPGATVTLTGGFRRGKLQGHDVDFLITHPKEGQEAGLLPRVMCRLQDQGLILYHQHQHSCCESPTRLAQQSHMDAFERSFCIFRLPQPPGAAVGGSTRPCPSWKAVRVDLVVAPVSQFPFALLGWTGSKLFQRELRRFSRKEKGLWLNSHGLFDPEQKTFFQAASEEDIFRHLGLEYLPPEQRNA.

Residues 1–24 form a disordered region; it reads MLPKRRRARVGSPSGDAASSTPPS. Phosphoserine is present on Ser-12. The BRCT domain occupies 22–122; that stretch reads PPSTRFPGVA…QPVPVECRHR (101 aa). The interval 323–332 is involved in ssDNA binding; the sequence is RGKLQGHDVD. Asp-330, Asp-332, and Asp-418 together coordinate Mg(2+).

Belongs to the DNA polymerase type-X family. Mg(2+) serves as cofactor. As to expression, expressed in a number of tissues. Abundant in thymus.

The protein localises to the nucleus. The catalysed reaction is DNA(n) + a 2'-deoxyribonucleoside 5'-triphosphate = DNA(n+1) + diphosphate. Functionally, gap-filling polymerase involved in repair of DNA double-strand breaks by non-homologous end joining (NHEJ). Participates in immunoglobulin (Ig) light chain gene rearrangement in V(D)J recombination. This is DNA-directed DNA/RNA polymerase mu (POLM) from Homo sapiens (Human).